We begin with the raw amino-acid sequence, 559 residues long: Probable D-2-hydroxyglutarate dehydrogenase, mitochondrial (559 aa).

A mitochondrion-targeting transit peptide spans 1–80; that stretch reads MARRAAAGLL…MNFEVQKRSF (80 aa). The FAD-binding PCMH-type domain occupies 131–310; sequence YKGSSQLLLL…TKIAILTPAK (180 aa).

Belongs to the FAD-binding oxidoreductase/transferase type 4 family. As to quaternary structure, homodimer. FAD is required as a cofactor.

Its subcellular location is the mitochondrion. It carries out the reaction (R)-2-hydroxyglutarate + A = 2-oxoglutarate + AH2. Its function is as follows. Catalyzes the oxidation of D-2-hydroxyglutarate to alpha-ketoglutarate. The polypeptide is Probable D-2-hydroxyglutarate dehydrogenase, mitochondrial (D2HGDH) (Oryza sativa subsp. indica (Rice)).